The primary structure comprises 122 residues: EPIDERMAL PATTERNING FACTOR-like protein 1 (122 aa).

A signal peptide spans 1–26 (MFAIYKSTLLLLPLILILLITPQVSS). 3 disulfides stabilise this stretch: Cys55-Cys113, Cys59-Cys65, and Cys62-Cys115.

Belongs to the plant cysteine rich small secretory peptide family. Epidermal patterning factor subfamily.

The protein localises to the secreted. Functionally, controls stomatal patterning. This is EPIDERMAL PATTERNING FACTOR-like protein 1 from Arabidopsis thaliana (Mouse-ear cress).